The following is a 78-amino-acid chain: MRLLALSGLLCMLLLCFCIFSSEGRRHPAKSLKLRRCCHLSPRSKLTTWKGNHTRPCRLCRNKLPVKSWVVPGALPQI.

The signal sequence occupies residues 1–24 (MRLLALSGLLCMLLLCFCIFSSEG). Disulfide bonds link Cys37–Cys60 and Cys38–Cys57.

In terms of assembly, interacts with SUSD2; the interaction is direct. Highly abundant in the testis, colon, eye, and tongue. Detected in the epithelial layer of the colon, but not the small intestine.

The protein localises to the secreted. Highly cationic protein that has multiple functions. Acts as a chemotactic factor that mediates lymphocytes recruitment to epithelia through binding and activation of the G-protein coupled receptor GPR15. May be a tumor suppressor; together with SUSD2 has a growth inhibitory effect on colon cancer cells which includes G1 cell cycle arrest. May regulate keratinocyte proliferation. In addition, through activation of Mas-related G protein-coupled receptors (MRGPRs) contributes to pruritogenesis by activating itch-selective sensory neurons and mast cells degranulation. Functionally, has antimicrobial activity against Gram-positive bacteria, including Staphylococcus aureus and Actinomyces spec., and Mycoplasma hominis and lentivirus. The chain is Protein GPR15LG (Gpr15lg) from Mus musculus (Mouse).